The chain runs to 262 residues: Sulfur carrier protein FdhD (262 aa).

Cys-105 serves as the catalytic Cysteine persulfide intermediate. Phe-246–Arg-251 provides a ligand contact to Mo-bis(molybdopterin guanine dinucleotide).

This sequence belongs to the FdhD family.

It is found in the cytoplasm. In terms of biological role, required for formate dehydrogenase (FDH) activity. Acts as a sulfur carrier protein that transfers sulfur from IscS to the molybdenum cofactor prior to its insertion into FDH. This Picrophilus torridus (strain ATCC 700027 / DSM 9790 / JCM 10055 / NBRC 100828 / KAW 2/3) protein is Sulfur carrier protein FdhD.